Here is a 680-residue protein sequence, read N- to C-terminus: HEAT repeat-containing protein 3 (680 aa).

Positions 1–11 are enriched in basic residues; that stretch reads MGKSRTKRFKR. The tract at residues 1–39 is disordered; the sequence is MGKSRTKRFKRPQFSPTGDCQAEAAAAANGTGGEEDDGP. Phosphoserine is present on Ser-15. Residues 18-29 show a composition bias toward low complexity; sequence GDCQAEAAAAAN. 2 HEAT repeats span residues 38 to 69 and 74 to 110; these read GPAA…VQQR and GLAR…SACG. Ser-144 carries the phosphoserine modification. Thr-340 carries the phosphothreonine modification.

Belongs to the nuclear import and ribosome assembly adapter family. As to quaternary structure, component of a hexameric 5S RNP precursor complex, composed of 5S RNA, RRS1, RPF2/BXDC1, RPL5, RPL11 and HEATR3; this complex acts as a precursor for ribosome assembly.

Functionally, plays a role in ribosome biogenesis and in nuclear import of the 60S ribosomal protein L5/large ribosomal subunit protein uL18 (RPL5). Required for proper erythrocyte maturation. The polypeptide is HEAT repeat-containing protein 3 (HEATR3) (Homo sapiens (Human)).